Consider the following 438-residue polypeptide: DNA primase DnaG (438 aa).

The 75-residue stretch at D169–Y243 folds into the Toprim domain. Mg(2+)-binding residues include E175, D217, and D219.

Belongs to the archaeal DnaG primase family. As to quaternary structure, forms a ternary complex with MCM helicase and DNA. Mg(2+) is required as a cofactor.

The enzyme catalyses ssDNA + n NTP = ssDNA/pppN(pN)n-1 hybrid + (n-1) diphosphate.. RNA polymerase that catalyzes the synthesis of short RNA molecules used as primers for DNA polymerase during DNA replication. This chain is DNA primase DnaG, found in Methanococcus maripaludis (strain C6 / ATCC BAA-1332).